The primary structure comprises 739 residues: Adhesion G protein-coupled receptor L4 (739 aa).

The N-terminal stretch at 1-19 (MRLLPLLVGFSTLLNCSYT) is a signal peptide. The EGF-like 1 domain maps to 20–57 (QNCSKTTCLPNAKCEVHNGVEACFCSQGYSGNGVTICE). Over 20–481 (QNCSKTTCLP…DYNILTRITQ (462 aa)) the chain is Extracellular. Residue Asn-21 is glycosylated (N-linked (GlcNAc...) asparagine). Disulfide bonds link Cys-22–Cys-33, Cys-27–Cys-42, Cys-44–Cys-56, Cys-62–Cys-74, Cys-68–Cys-83, Cys-85–Cys-106, Cys-112–Cys-124, Cys-118–Cys-133, and Cys-135–Cys-156. In terms of domain architecture, EGF-like 2; calcium-binding spans 58-107 (DIDECSESSVCGDHAVCENVNGGFSCFCREGYQTATGKSQFTPNDGSYCQ). One can recognise an EGF-like 3; calcium-binding domain in the interval 108–157 (DIDECSESSVCGDHAVCENVNGGFSCFCREGYQTATGKSQFTPNDGSYCQ). Asn-176, Asn-226, Asn-237, Asn-298, Asn-422, Asn-430, and Asn-444 each carry an N-linked (GlcNAc...) asparagine glycan. The 176-residue stretch at 293-468 (SQFDMNSTDL…AILMSSTSSI (176 aa)) folds into the GAIN-B domain. Disulfide bonds link Cys-418-Cys-450 and Cys-438-Cys-452. Positions 418-468 (CAFWNYSVDAMNNGSWSTEGCELTHSNDTHTSCRCSHLTHFAILMSSTSSI) are GPS. The chain crosses the membrane as a helical span at residues 482 to 502 (LGIIISLICLAICIFTFWFFS). At 503–513 (EIQSTRTTIHK) the chain is on the cytoplasmic side. The chain crosses the membrane as a helical span at residues 514–534 (NLCCSLFLAELVFLIGININT). The Extracellular segment spans residues 535-548 (NKLVCSIIAGLLHY). Residues 549-569 (FFLAAFAWMCIEGIHLYLIVV) form a helical membrane-spanning segment. The Cytoplasmic portion of the chain corresponds to 570-581 (GVIYNKGFLHKN). Residues 582–602 (FYIFGYLSPAVVVGFSASLGY) form a helical membrane-spanning segment. At 603–622 (RYYGTTKVCWLSTENNFIWS) the chain is on the extracellular side. Residues 623 to 643 (FIGPACLIILVNLLAFGVIIY) traverse the membrane as a helical segment. Topologically, residues 644 to 667 (KVFRHTAGLKPEVSCYENIRSCAR) are cytoplasmic. The chain crosses the membrane as a helical span at residues 668 to 688 (GALALLFLLGTTWIFGVLHVV). Topologically, residues 689–695 (HASVVTA) are extracellular. A helical membrane pass occupies residues 696-716 (YLFTVSNAFQGMFIFLFLCVL). Residues 717-739 (SRKIQEEYYRLFKNVPCCFGCLR) lie on the Cytoplasmic side of the membrane.

The protein belongs to the G-protein coupled receptor 2 family. Adhesion G-protein coupled receptor (ADGR) subfamily. As to quaternary structure, heterodimer of 2 chains generated by proteolytic processing; the large extracellular N-terminal fragment and the membrane-bound C-terminal fragment predominantly remain associated and non-covalently linked. Post-translationally, glycosylated. Proteolytically cleaved into 2 subunits, an extracellular alpha subunit and a seven-transmembrane subunit.

The protein resides in the cell membrane. Functionally, endothelial orphan receptor that acts as a key regulator of angiogenesis. The polypeptide is Adhesion G protein-coupled receptor L4 (Adgrl4) (Mus musculus (Mouse)).